The following is a 782-amino-acid chain: Cadherin-5 (782 aa).

The N-terminal stretch at 1 to 22 (MQVLVMLLAAAGTYLGLLTAPT) is a signal peptide. Residues 23-44 (AASNPGRQDTPSTLPLHRRQKR) constitute a propeptide that is removed on maturation. 5 Cadherin domains span residues 45-148 (DWIW…WPVF), 149-255 (TQLV…FPVF), 256-370 (TQTR…PPNF), 371-475 (KQPF…DNAP), and 476-592 (EFAK…MGAQ). Over 45–598 (DWIWNQMHID…MGAQVGVSIQ (554 aa)) the chain is Extracellular. 2 residues coordinate Ca(2+): glutamate 55 and glutamate 56. Asparagine 58 carries N-linked (GlcNAc...) asparagine glycosylation. Aspartate 106, glutamate 108, aspartate 140, isoleucine 141, asparagine 142, aspartate 143, and asparagine 144 together coordinate Ca(2+). N-linked (GlcNAc...) asparagine glycosylation occurs at asparagine 154. Residues aspartate 174, aspartate 176, histidine 183, and aspartate 228 each contribute to the Ca(2+) site. N-linked (GlcNAc...) asparagine glycosylation is found at asparagine 360, asparagine 440, asparagine 522, and asparagine 534. Residues 599–619 (ALVAIFLCILTIAVISLLVYL) form a helical membrane-spanning segment. The required for interaction with PALS1 stretch occupies residues 620–659 (RRRLRKQARAHGKSVPEIHEQLVTYDEEGGGEMDTTSYDV). Topologically, residues 620–782 (RRRLRKQARA…GSDPREELLY (163 aa)) are cytoplasmic.

As to quaternary structure, part of a complex composed of AMOTL2, MAGI1 and CDH5, within the complex AMOTL2 acts as a scaffold protein for the interaction of MAGI1 with CDH5. The complex is required for coupling actin fibers to cell junctions in endothelial cells. Within the complex AMOTL2 (via its N-terminus) interacts with CDH5. Interacts (via cadherin 5 domain) with PTPRB. Interacts with TRPC4. Interacts with KRIT1. Interacts with PARD3. Interacts with RTN4 (isoform B). Interacts with PALS1; the interaction promotes PALS1 localization to cell junctions and is required for CDH5-mediated vascular lumen formation and endothelial cell. Interacts with CTNND1/p120-catenin; the interaction controls CADH5 endocytosis. In terms of processing, phosphorylated on tyrosine residues by KDR/VEGFR-2. Dephosphorylated by PTPRB. O-glycosylated.

It localises to the cell junction. It is found in the adherens junction. The protein localises to the cell membrane. The protein resides in the cytoplasm. Cadherins are calcium-dependent cell adhesion proteins. They preferentially interact with themselves in a homophilic manner in connecting cells; cadherins may thus contribute to the sorting of heterogeneous cell types. This cadherin may play a important role in endothelial cell biology through control of the cohesion and organization of the intercellular junctions. It associates with alpha-catenin forming a link to the cytoskeleton. Plays a role in coupling actin fibers to cell junctions in endothelial cells, via acting as a cell junctional complex anchor for AMOTL2 and MAGI1. Acts in concert with KRIT1 and PALS1 to establish and maintain correct endothelial cell polarity and vascular lumen. These effects are mediated by recruitment and activation of the Par polarity complex and RAP1B. Required for activation of PRKCZ and for localization of phosphorylated PRKCZ, PARD3, TIAM1 and RAP1B to the cell junction. Associates with CTNND1/p120-catenin to control CADH5 endocytosis. This Sus scrofa (Pig) protein is Cadherin-5.